Consider the following 254-residue polypeptide: Claudin-16 (254 aa).

Residues 1–22 (MGPGLAASHVSFPDSLLAKMRD) lie on the Cytoplasmic side of the membrane. The helical transmembrane segment at 23–43 (LLQYVACFFAFFSAGFLVVAT) threads the bilayer. Topologically, residues 44–98 (WTDCWMVNADDSLEVSTKCRGLWWECVTNAFDGIRTCDEYDSILAEHSLKLVVTR) are extracellular. The helical transmembrane segment at 99–119 (ALMITADILAGFGFITLLLGL) threads the bilayer. The Cytoplasmic portion of the chain corresponds to 120–134 (DCVKFLPDEPYIKVR). A helical membrane pass occupies residues 135-155 (ISFVAGTTLLIAGAPGIIGSV). At 156 to 188 (WYAVDVYVERSSLVLHNIFLGIQYKFGWSCWLG) the chain is on the extracellular side. A helical membrane pass occupies residues 189–209 (MAGSLGCFLAGAILTCCLYLF). The Cytoplasmic segment spans residues 210–254 (KDVGPERSYPYSTRKAYSTTAVSMPRSHAIPRTQTAKMYAVDTRV). Positions 252–254 (TRV) match the Interaction with TJP1 motif.

It belongs to the claudin family. In terms of assembly, can form heteropolymeric tight junction strands with other claudins. Interacts with CLDN19. Interacts (via PDZ-binding motif TRV) with TJP1 (via PDZ domain). Cannot form tight junction strands on its own. In terms of tissue distribution, expressed preferentially in kidney.

The protein resides in the cell junction. Its subcellular location is the tight junction. It is found in the cell membrane. The enzyme catalyses Mg(2+)(in) = Mg(2+)(out). It catalyses the reaction Ca(2+)(in) = Ca(2+)(out). It carries out the reaction Na(+)(in) = Na(+)(out). The catalysed reaction is K(+)(in) = K(+)(out). The enzyme catalyses Rb(+)(in) = Rb(+)(out). It catalyses the reaction Cs(+)(in) = Cs(+)(out). It carries out the reaction Li(+)(in) = Li(+)(out). In terms of biological role, forms paracellular channels: coassembles with CLDN19 into tight junction strands with cation-selective channels through the strands, conveying epithelial permeability in a process known as paracellular tight junction permeability. Involved in the maintenance of ion gradients along the nephron. In the thick ascending limb (TAL) of Henle's loop, facilitates sodium paracellular permeability from the interstitial compartment to the lumen, contributing to the lumen-positive transepithelial potential that drives paracellular magnesium and calcium reabsorption. This Bos taurus (Bovine) protein is Claudin-16 (CLDN16).